The chain runs to 275 residues: Bis(5'-nucleosyl)-tetraphosphatase, symmetrical (275 aa).

This sequence belongs to the Ap4A hydrolase family.

It catalyses the reaction P(1),P(4)-bis(5'-adenosyl) tetraphosphate + H2O = 2 ADP + 2 H(+). Hydrolyzes diadenosine 5',5'''-P1,P4-tetraphosphate to yield ADP. The protein is Bis(5'-nucleosyl)-tetraphosphatase, symmetrical of Actinobacillus succinogenes (strain ATCC 55618 / DSM 22257 / CCUG 43843 / 130Z).